Here is an 842-residue protein sequence, read N- to C-terminus: Oleate activated transcription factor 3 (842 aa).

A DNA-binding region (zn(2)-C6 fungal-type) is located at residues 22 to 50; the sequence is CTNCKRRKSKCDRQNPCSNCVRFGNKDTC. The tract at residues 55–101 is disordered; it reads NPKNTESQHGEDTDNKVKKQQPQMIKGKRNGTSSSIVGSKASSISPT. Residues 60-71 are compositionally biased toward basic and acidic residues; that stretch reads ESQHGEDTDNKV. A compositionally biased stretch (low complexity) spans 87–99; that stretch reads SSSIVGSKASSIS.

The protein belongs to the OAF3 family.

The protein localises to the cytoplasm. It is found in the nucleus. Its subcellular location is the mitochondrion. Transcriptional inhibitor with a significantly increased number of target genes in response to oleate. The protein is Oleate activated transcription factor 3 (OAF3) of Zygosaccharomyces rouxii (strain ATCC 2623 / CBS 732 / NBRC 1130 / NCYC 568 / NRRL Y-229).